The primary structure comprises 272 residues: Zinc transporter ZupT (272 aa).

8 helical membrane-spanning segments follow: residues 11-31 (IALA…LMVV), 40-60 (LLAF…LTEI), 76-96 (LGFT…MVID), 126-146 (LMTA…TFFA), 158-178 (AFAI…PVYF), 189-209 (ASLL…LALF), 211-231 (VLSD…MVFL), and 250-270 (VYGL…FRFA). The Fe(2+) site is built by asparagine 136 and glutamate 139. Glutamate 139 and histidine 164 together coordinate Zn(2+). Fe(2+)-binding residues include asparagine 165, glutamate 168, and glutamate 197. Glutamate 168 provides a ligand contact to Zn(2+).

It belongs to the ZIP transporter (TC 2.A.5) family. ZupT subfamily.

It is found in the cell inner membrane. The catalysed reaction is Zn(2+)(in) = Zn(2+)(out). Mediates zinc uptake. May also transport other divalent cations. In Xanthomonas axonopodis pv. citri (strain 306), this protein is Zinc transporter ZupT.